A 271-amino-acid chain; its full sequence is Shikimate dehydrogenase (NADP(+)) (271 aa).

Shikimate contacts are provided by residues 14-16 (SQS) and T61. Residue K65 is the Proton acceptor of the active site. Residues N86 and D101 each coordinate shikimate. Residues 125–129 (GAGGA), 148–153 (NRTHAR), and M212 contribute to the NADP(+) site. Residue Y214 participates in shikimate binding. Position 236 (G236) interacts with NADP(+).

It belongs to the shikimate dehydrogenase family. In terms of assembly, homodimer.

It carries out the reaction shikimate + NADP(+) = 3-dehydroshikimate + NADPH + H(+). It participates in metabolic intermediate biosynthesis; chorismate biosynthesis; chorismate from D-erythrose 4-phosphate and phosphoenolpyruvate: step 4/7. In terms of biological role, involved in the biosynthesis of the chorismate, which leads to the biosynthesis of aromatic amino acids. Catalyzes the reversible NADPH linked reduction of 3-dehydroshikimate (DHSA) to yield shikimate (SA). This is Shikimate dehydrogenase (NADP(+)) from Edwardsiella ictaluri (strain 93-146).